We begin with the raw amino-acid sequence, 293 residues long: GTPase Era (293 aa).

One can recognise an Era-type G domain in the interval 5 to 174 (RTISVCIIGR…ITGKAQIAPW (170 aa)). The segment at 13–20 (GRPNSGKS) is G1. 13-20 (GRPNSGKS) provides a ligand contact to GTP. Positions 39 to 43 (QTTRS) are G2. Residues 60–63 (DTPG) form a G3 region. GTP is bound by residues 60–64 (DTPGI) and 122–125 (NKID). Residues 122–125 (NKID) are G4. Residues 150–152 (ISA) are G5. Residues 202 to 279 (LQQELPYKLT…HLFLFVKVHE (78 aa)) form the KH type-2 domain.

Belongs to the TRAFAC class TrmE-Era-EngA-EngB-Septin-like GTPase superfamily. Era GTPase family. Monomer.

The protein resides in the cytoplasm. Its subcellular location is the cell inner membrane. Functionally, an essential GTPase that binds both GDP and GTP, with rapid nucleotide exchange. Plays a role in 16S rRNA processing and 30S ribosomal subunit biogenesis and possibly also in cell cycle regulation and energy metabolism. This is GTPase Era from Rickettsia akari (strain Hartford).